The chain runs to 1085 residues: MDTPENVLQMLEAHMQSYKGNDPLGEWERYIQWVEENFPENKEYLITLLEHLMKEFLDKKKYHNDPRFISYCLKFAEYNSDLHQFFEFLYNHGIGTLSSPLYIAWAGHLEAQGELQHASAVLQRGIQNQAEPREFLQQQYRLFQTRLTETHLPAQARTSEPLHNVQVLNQMITSKSNPGNNMACISKNQGSELSGVISSACDKESNMERRVITISKSEYSVHSSLASKVDVEQVVMYCKEKLIRGESEFSFEELRAQKYNQRRKHEQWVNEDRHYMKRKEANAFEEQLLKQKMDELHKKLHQVVETSHEDLPASQERSEVNPARMGPSVGSQQELRAPCLPVTYQQTPVNMEKNPREAPPVVPPLANAISAALVSPATSQSIAPPVPLKAQTVTDSMFAVASKDAGCVNKSTHEFKPQSGAEIKEGCETHKVANTSSFHTTPNTSLGMVQATPSKVQPSPTVHTKEALGFIMNMFQAPTLPDISDDKDEWQSLDQNEDAFEAQFQKNVRSSGAWGVNKIISSLSSAFHVFEDGNKENYGLPQPKNKPTGARTFGERSVSRLPSKPKEEVPHAEEFLDDSTVWGIRCNKTLAPSPKSPGDFTSAAQLASTPFHKLPVESVHILEDKENVVAKQCTQATLDSCEENMVVPSRDGKFSPIQEKSPKQALSSHMYSASLLRLSQPAAGGVLTCEAELGVEACRLTDTDAAIAEDPPDAIAGLQAEWMQMSSLGTVDAPNFIVGNPWDDKLIFKLLSGLSKPVSSYPNTFEWQCKLPAIKPKTEFQLGSKLVYVHHLLGEGAFAQVYEATQGDLNDAKNKQKFVLKVQKPANPWEFYIGTQLMERLKPSMQHMFMKFYSAHLFQNGSVLVGELYSYGTLLNAINLYKNTPEKVMPQGLVISFAMRMLYMIEQVHDCEIIHGDIKPDNFILGNGFLEQDDEDDLSAGLALIDLGQSIDMKLFPKGTIFTAKCETSGFQCVEMLSNKPWNYQIDYFGVAATVYCMLFGTYMKVKNEGGECKPEGLFRRLPHLDMWNEFFHVMLNIPDCHHLPSLDLLRQKLKKVFQQHYTNKIRALRNRLIVLLLECKRSRK.

The segment at 1–146 (MDTPENVLQM…QQQYRLFQTR (146 aa)) is necessary for kinetochore localization. A BUB1 N-terminal domain is found at 11–182 (LEAHMQSYKG…TSKSNPGNNM (172 aa)). The Nuclear localization signal signature appears at 58–65 (DKKKYHND). A necessary for interaction with KNL1 region spans residues 99 to 132 (SPLYIAWAGHLEAQGELQHASAVLQRGIQNQAEP). Residues 229 to 256 (VDVEQVVMYCKEKLIRGESEFSFEELRA) are necessary for interaction with BUB3. Positions 305 to 333 (ETSHEDLPASQERSEVNPARMGPSVGSQQ) are disordered. Residues 306-319 (TSHEDLPASQERSE) show a composition bias toward basic and acidic residues. 4 positions are modified to phosphoserine: Ser-307, Ser-314, Ser-331, and Ser-375. An essential for loading of BUBR1, MAD1L1 and MAD2L1 to kinetochores region spans residues 458 to 476 (PSPTVHTKEALGFIMNMFQ). Phosphoserine is present on Ser-525. Positions 535–537 (KEN) match the KEN box 1 motif. Residues 538 to 570 (YGLPQPKNKPTGARTFGERSVSRLPSKPKEEVP) are disordered. The span at 553 to 570 (FGERSVSRLPSKPKEEVP) shows a compositional bias: basic and acidic residues. Phosphoserine occurs at positions 563, 593, and 596. Thr-609 carries the phosphothreonine; by CDK1 modification. A KEN box 2 motif is present at residues 625-627 (KEN). A phosphoserine mark is found at Ser-655, Ser-661, Ser-668, and Ser-672. One can recognise a Protein kinase domain in the interval 787–1085 (VYVHHLLGEG…LLLECKRSRK (299 aa)). ATP is bound by residues 793 to 801 (LGEGAFAQV) and Lys-821. The Proton acceptor role is filled by Asp-917.

The protein belongs to the protein kinase superfamily. Ser/Thr protein kinase family. BUB1 subfamily. Interacts with BUB3 and KNL1. Interacts (when phosphorylated) with PLK1. The BUB1-BUB3 complex interacts with MAD1L1. In terms of assembly, (Microbial infection) Interacts with SV40 Large T antigen; this interaction induces activation of a DNA damage response and promotes p53/TP53 stabilization and phosphorylation. As to quaternary structure, (Microbial infection) Interacts with herpes virus 8 protein LANA1. Post-translationally, upon spindle-assembly checkpoint activation it is hyperphosphorylated and its kinase activity toward CDC20 is stimulated. Phosphorylation at Thr-609 is required for interaction with PLK1, phosphorylation at this site probably creates a binding site for the POLO-box domain of PLK1, thus enhancing the PLK1-BUB1 interaction. Ubiquitinated and degraded during mitotic exit by APC/C-Cdh1. As to expression, high expression in testis and thymus, less in colon, spleen, lung and small intestine. Expressed in fetal thymus, bone marrow, heart, liver, spleen and thymus. Expression is associated with cells/tissues with a high mitotic index.

The protein resides in the nucleus. The protein localises to the chromosome. It localises to the centromere. Its subcellular location is the kinetochore. The catalysed reaction is L-seryl-[protein] + ATP = O-phospho-L-seryl-[protein] + ADP + H(+). It carries out the reaction L-threonyl-[protein] + ATP = O-phospho-L-threonyl-[protein] + ADP + H(+). With respect to regulation, autophosphorylated when the cells enters mitosis. Serine/threonine-protein kinase that performs 2 crucial functions during mitosis: it is essential for spindle-assembly checkpoint signaling and for correct chromosome alignment. Has a key role in the assembly of checkpoint proteins at the kinetochore, being required for the subsequent localization of CENPF, BUB1B, CENPE and MAD2L1. Required for the kinetochore localization of PLK1. Required for centromeric enrichment of AUKRB in prometaphase. Plays an important role in defining SGO1 localization and thereby affects sister chromatid cohesion. Promotes the centromeric localization of TOP2A. Acts as a substrate for anaphase-promoting complex or cyclosome (APC/C) in complex with its activator CDH1 (APC/C-Cdh1). Necessary for ensuring proper chromosome segregation and binding to BUB3 is essential for this function. Can regulate chromosome segregation in a kinetochore-independent manner. Can phosphorylate BUB3. The BUB1-BUB3 complex plays a role in the inhibition of APC/C when spindle-assembly checkpoint is activated and inhibits the ubiquitin ligase activity of APC/C by phosphorylating its activator CDC20. This complex can also phosphorylate MAD1L1. Kinase activity is essential for inhibition of APC/CCDC20 and for chromosome alignment but does not play a major role in the spindle-assembly checkpoint activity. Mediates cell death in response to chromosome missegregation and acts to suppress spontaneous tumorigenesis. This Homo sapiens (Human) protein is Mitotic checkpoint serine/threonine-protein kinase BUB1 (BUB1).